We begin with the raw amino-acid sequence, 336 residues long: Large ribosomal subunit protein uL1 (336 aa).

The large ribosomal subunit protein uL1 stretch occupies residues methionine 1–isoleucine 245. The tract at residues alanine 246–lysine 336 is unknown. Positions alanine 267 to lysine 336 are disordered. Over residues lysine 286–valine 305 the composition is skewed to basic residues. The span at alanine 306–lysine 315 shows a compositional bias: low complexity.

Belongs to the universal ribosomal protein uL1 family. Part of the 50S ribosomal subunit.

Binds directly to 23S rRNA. The L1 stalk is quite mobile in the ribosome, and is involved in E site tRNA release. Functionally, protein L1 is also a translational repressor protein, it controls the translation of the L11 operon by binding to its mRNA. In Malacoplasma penetrans (strain HF-2) (Mycoplasma penetrans), this protein is Large ribosomal subunit protein uL1.